The primary structure comprises 425 residues: Trigger factor (425 aa).

A PPIase FKBP-type domain is found at 163–248 (GDTAVIDFEG…IHEIKTKELP (86 aa)).

It belongs to the FKBP-type PPIase family. Tig subfamily.

The protein localises to the cytoplasm. The catalysed reaction is [protein]-peptidylproline (omega=180) = [protein]-peptidylproline (omega=0). In terms of biological role, involved in protein export. Acts as a chaperone by maintaining the newly synthesized protein in an open conformation. Functions as a peptidyl-prolyl cis-trans isomerase. This chain is Trigger factor, found in Bacillus cereus (strain G9842).